The sequence spans 604 residues: Solute carrier family 23 member 1 (604 aa).

Residues 1-29 (MKAQEDPGSSKQHECPDSAGTSTRDQQAP) are disordered. Residues 1–59 (MKAQEDPGSSKQHECPDSAGTSTRDQQAPLPAEPKFDMLYKIEDVPPWYLCILLGFQHY) lie on the Cytoplasmic side of the membrane. Residues 60–80 (LTCFSGTIAVPFLLAEALCVG) form a helical membrane-spanning segment. At 81–88 (RDQHMISQ) the chain is on the extracellular side. Residues 89–109 (LIGTIFTCVGITTLIQTTVGI) traverse the membrane as a helical segment. Arginine 110 is a topological domain (cytoplasmic). Residues 111–131 (LPLFQASAFAFLVPAKAILAL) form a helical membrane-spanning segment. At 132–166 (ERWKCPPEEEIYGNWSMPLNTSHIWHPRIREVQGA) the chain is on the extracellular side. N-linked (GlcNAc...) asparagine glycosylation is found at asparagine 145 and asparagine 151. A helical transmembrane segment spans residues 167–187 (IMVSSVVEVVIGLLGLPGALL). Residues 188-214 (SYIGPLTVTPTVSLIGLSVFQAAGDRA) lie on the Cytoplasmic side of the membrane. Residues 215-232 (GSHWGISACSILLIVLFS) form a helical membrane-spanning segment. Topologically, residues 233–236 (QYLR) are extracellular. Positions 237 to 250 (NLTFLLPVYRWGKG) form an intramembrane region, helical. At 251–257 (LTLFRIQ) the chain is on the extracellular side. The chain crosses the membrane as a helical span at residues 258–278 (IFKMFPIVLAIMTVWLLCYVL). Topologically, residues 279–319 (TLTDVLPADPTVYGFQARTDARGDIMAISPWIRIPYPCQWG) are cytoplasmic. Residues 320-340 (LPTVTVAAVLGMFSATLAGII) traverse the membrane as a helical segment. Residues 341–365 (ESIGDYYACARLAGAPPPPVHAINR) lie on the Extracellular side of the membrane. The helical transmembrane segment at 366–386 (GIFTEGVCCIIAGLLGTGNGS) threads the bilayer. The Cytoplasmic segment spans residues 387–409 (TSSSPNIGVLGITKVGSRRVVQY). A helical transmembrane segment spans residues 410–430 (GAGIMLILGAIGKFTALFASL). At 431–433 (PDP) the chain is on the extracellular side. Residues 434 to 454 (ILGGMFCTLFGMITAVGLSNL) traverse the membrane as a helical segment. Residues 455–464 (QFVDMNSSRN) are Cytoplasmic-facing. A helical membrane pass occupies residues 465–485 (LFVLGFSMFFGLTLPNYLDSN). Topologically, residues 486 to 497 (PGAINTGVPEVD) are extracellular. The helical transmembrane segment at 498 to 518 (QILTVLLTTEMFVGGCLAFIL) threads the bilayer. Residues 519–604 (DNTVPGSPEE…TETGSVCTKV (86 aa)) lie on the Cytoplasmic side of the membrane. A Phosphothreonine modification is found at threonine 597. Residue serine 599 is modified to Phosphoserine. Threonine 602 carries the phosphothreonine modification.

This sequence belongs to the nucleobase:cation symporter-2 (NCS2) (TC 2.A.40) family. In terms of processing, phosphorylated. Highly expressed in the straight segment of proximal tubules in the kidney, in intestine and liver. Detected in epithelial cells of the bronchiole and epididymis.

The protein localises to the cell membrane. The enzyme catalyses L-ascorbate(out) + 2 Na(+)(out) = L-ascorbate(in) + 2 Na(+)(in). It catalyses the reaction urate(out) + 2 Na(+)(out) = urate(in) + 2 Na(+)(in). In terms of biological role, sodium/ascorbate cotransporter. Mediates electrogenic uptake of vitamin C, with a stoichiometry of 2 Na(+) for each ascorbate. Has retained some ancestral activity toward nucleobases such as urate, an oxidized purine. Low-affinity high-capacity sodium:urate cotransporter, may regulate serum urate levels by serving as a renal urate re-absorber. This Rattus norvegicus (Rat) protein is Solute carrier family 23 member 1 (Slc23a1).